Consider the following 354-residue polypeptide: Rhodopsin (354 aa).

The Extracellular segment spans residues 1–36 (MNGTEGPDFYVPMVNTTGIVRSPYDYPQYYLVNPAA). N2 and N15 each carry an N-linked (GlcNAc...) asparagine glycan. A helical transmembrane segment spans residues 37 to 61 (FSMLAAYMFFLILVGFPVNFLTLYV). At 62 to 73 (TMEHKKLRTPLN) the chain is on the cytoplasmic side. The chain crosses the membrane as a helical span at residues 74 to 96 (YILLNLAVANLFMVIGGFTTTMY). Topologically, residues 97–110 (TSMHGYFVLGRTGC) are extracellular. A disulfide bridge connects residues C110 and C187. Residues 111-133 (NLEGFFATLGGEIALWSLVVLAV) traverse the membrane as a helical segment. The short motif at 134–136 (ERW) is the 'Ionic lock' involved in activated form stabilization element. Residues 134-152 (ERWVVVCKPISNFRFGENH) are Cytoplasmic-facing. A helical transmembrane segment spans residues 153–173 (AVMGVSFTWLMACACSVPPLF). Over 174–202 (GWSRYIPEGMQCSCGIDYYTRAPGYNNES) the chain is Extracellular. Residues 203–224 (FVIYMFVCHFSIPLTIIFFCYG) traverse the membrane as a helical segment. Topologically, residues 225 to 252 (RLLCAVKDAAAAQQESETTQRAEREVSR) are cytoplasmic. A helical transmembrane segment spans residues 253–274 (MVVIMVIGFLICWLPYASVAWF). The Extracellular segment spans residues 275-286 (IFTHQGSEFGPV). Residues 287–308 (FMTIPAFFAKSSAIYNPMIYIC) form a helical membrane-spanning segment. K296 bears the N6-(retinylidene)lysine mark. The Cytoplasmic segment spans residues 309-354 (MNKQFRHCMITTLCCGKNPFEEEEGASTTASKTEASSVSSSHVSPA). Residues C322 and C323 are each lipidated (S-palmitoyl cysteine). The segment at 333 to 354 (GASTTASKTEASSVSSSHVSPA) is disordered. Positions 334-354 (ASTTASKTEASSVSSSHVSPA) are enriched in low complexity.

It belongs to the G-protein coupled receptor 1 family. Opsin subfamily. In terms of processing, phosphorylated on some or all of the serine and threonine residues present in the C-terminal region. Post-translationally, contains one covalently linked retinal chromophore.

It is found in the membrane. It localises to the cell projection. The protein localises to the cilium. The protein resides in the photoreceptor outer segment. Its function is as follows. Photoreceptor required for image-forming vision at low light intensity. While most salt water fish species use retinal as chromophore, most freshwater fish use 3-dehydroretinal, or a mixture of retinal and 3-dehydroretinal. Light-induced isomerization of 11-cis to all-trans retinal triggers a conformational change that activates signaling via G-proteins. Subsequent receptor phosphorylation mediates displacement of the bound G-protein alpha subunit by arrestin and terminates signaling. This Zeus faber (John Dory) protein is Rhodopsin (rho).